Reading from the N-terminus, the 208-residue chain is Protein GrpE (208 aa).

The segment covering 1 to 27 has biased composition (basic and acidic residues); sequence MERMNQSRKVPIHDAAEESSAEAHETQ. A disordered region spans residues 1–65; it reads MERMNQSRKV…AEEAQEEEAA (65 aa). The span at 45-64 shows a compositional bias: acidic residues; it reads MAEEAVEQAQDAEEAQEEEA.

This sequence belongs to the GrpE family. Homodimer.

Its subcellular location is the cytoplasm. In terms of biological role, participates actively in the response to hyperosmotic and heat shock by preventing the aggregation of stress-denatured proteins, in association with DnaK and GrpE. It is the nucleotide exchange factor for DnaK and may function as a thermosensor. Unfolded proteins bind initially to DnaJ; upon interaction with the DnaJ-bound protein, DnaK hydrolyzes its bound ATP, resulting in the formation of a stable complex. GrpE releases ADP from DnaK; ATP binding to DnaK triggers the release of the substrate protein, thus completing the reaction cycle. Several rounds of ATP-dependent interactions between DnaJ, DnaK and GrpE are required for fully efficient folding. The protein is Protein GrpE of Desulfatibacillum aliphaticivorans.